Consider the following 613-residue polypeptide: DNA mismatch repair protein MutL (613 aa).

This sequence belongs to the DNA mismatch repair MutL/HexB family.

Its function is as follows. This protein is involved in the repair of mismatches in DNA. It is required for dam-dependent methyl-directed DNA mismatch repair. May act as a 'molecular matchmaker', a protein that promotes the formation of a stable complex between two or more DNA-binding proteins in an ATP-dependent manner without itself being part of a final effector complex. The chain is DNA mismatch repair protein MutL from Flavobacterium psychrophilum (strain ATCC 49511 / DSM 21280 / CIP 103535 / JIP02/86).